The chain runs to 608 residues: 65-kDa microtubule-associated protein 6 (608 aa).

3 coiled-coil regions span residues 164–186 (DLTLRNLNEYQTHLRTLQKEKSD), 368–388 (ELLANIEMQINKIKDEAQSRK), and 467–503 (VRLVNILEDYKLTRKQQEEEKKRYRDQKKRQDLLLTQ). A disordered region spans residues 501 to 565 (LTQRESIYGS…RSYSGHHRQN (65 aa)). Positions 510–523 (SKPSPRRSSSFRKP) are enriched in low complexity. Serine 513 bears the Phosphoserine mark. Positions 526-535 (FNISNGNGSV) are enriched in polar residues. Serine 604 bears the Phosphoserine mark.

This sequence belongs to the MAP65/ASE1 family. In terms of assembly, forms a dimer. Binds to polymerized centrally located endocytic MT.

It localises to the nucleus. It is found in the cytoplasm. The protein localises to the mitochondrion. The protein resides in the cytoskeleton. Its subcellular location is the phragmoplast. In terms of biological role, microtubule-associated protein that mediates the formation of a mesh-like stable and dense network formed by individual microtubules (MT). Confers MT resistance to high concentration of NaCl. In Arabidopsis thaliana (Mouse-ear cress), this protein is 65-kDa microtubule-associated protein 6 (MAP65-6).